We begin with the raw amino-acid sequence, 487 residues long: UDP-glycosyltransferase 72E1 (487 aa).

His-18 (proton acceptor) is an active-site residue. Position 18 (His-18) interacts with an anthocyanidin. Asp-116 (charge relay) is an active-site residue. UDP-alpha-D-glucose-binding residues include Ala-351, Gln-353, His-368, Trp-371, Asn-372, Ser-373, and Glu-376. Ala-391 is a binding site for an anthocyanidin. Glu-392 and Gln-393 together coordinate UDP-alpha-D-glucose.

This sequence belongs to the UDP-glycosyltransferase family. As to quaternary structure, interacts with SIS8. Expressed in seedlings, roots and leaves.

Its subcellular location is the nucleus. It carries out the reaction (E)-coniferaldehyde + UDP-alpha-D-glucose = 4-O-(beta-D-glucosyl)-4-(E)-coniferyl aldehyde + UDP + H(+). The enzyme catalyses (E)-sinapaldehyde + UDP-alpha-D-glucose = 4-O-(beta-D-glucosyl)-4-trans-sinapoyl aldehyde + UDP + H(+). Functionally, UDP-glycosyltransferase that glucosylates coniferyl aldehyde to form coniferyl aldehyde 4-O-glucoside. Glucosylates sinapyl aldehyde to form sinapyl aldehyde 4-O-glucoside. Is not active in presence of coniferyl alcohol or sinapyl alcohol. Can glucosylate the phytotoxic xenobiotic compound 2,4,5-trichlorophenol (TCP). This is UDP-glycosyltransferase 72E1 from Arabidopsis thaliana (Mouse-ear cress).